A 353-amino-acid chain; its full sequence is UPF0421 protein YgaE (353 aa).

4 helical membrane-spanning segments follow: residues 20 to 40 (LASW…IFAI), 67 to 87 (VFGL…VIVI), 103 to 123 (LVTV…FALI), and 125 to 145 (TSTV…FLPP).

The protein belongs to the UPF0421 family.

Its subcellular location is the cell membrane. The sequence is that of UPF0421 protein YgaE (ygaE) from Bacillus subtilis (strain 168).